Here is a 163-residue protein sequence, read N- to C-terminus: Ribosome maturation factor RimP (163 aa).

Belongs to the RimP family.

It localises to the cytoplasm. In terms of biological role, required for maturation of 30S ribosomal subunits. The protein is Ribosome maturation factor RimP of Streptococcus mutans serotype c (strain ATCC 700610 / UA159).